Here is a 333-residue protein sequence, read N- to C-terminus: MNVEPMYLTIFLIAGGIIFLVLFFHYVPFFLWLSAKVSGVNISLVQLFLMRIRNVPPYIIVPGMIEAHKAGLSNITRDELEAHYLAGGHVERVVHALVSASKANIELPFQMATAIDLAGRDVFEAVQMSVNPKVIDTPPVTAVAKDGIQLIAKARVTVRANIRQLVGGAGEDTILARVGEGIVSSIGSSENHKSVLENPDSISKLVLRKGLDAGTAFEILSIDIADIDIGKNIGAALQIDQANADKNIAQAKAEERRAMAVATEQEMKAKAEEARANVIQAEAEVPKAMAEAFRSGNLGIMDYYKMKNIQADTSMRENIAKPIGGATSKPLSD.

The helical transmembrane segment at 10–30 threads the bilayer; sequence IFLIAGGIIFLVLFFHYVPFF.

This sequence belongs to the flotillin-like FloA family. As to quaternary structure, homooligomerizes.

It localises to the cell membrane. It is found in the membrane raft. Found in functional membrane microdomains (FMM) that may be equivalent to eukaryotic membrane rafts. FMMs are highly dynamic and increase in number as cells age. Flotillins are thought to be important factors in membrane fluidity. This Bacteroides fragilis (strain ATCC 25285 / DSM 2151 / CCUG 4856 / JCM 11019 / LMG 10263 / NCTC 9343 / Onslow / VPI 2553 / EN-2) protein is Flotillin-like protein FloA.